Reading from the N-terminus, the 42-residue chain is Perlinhibin-related protein (42 aa).

Post-translationally, contains four disulfide bonds.

Its function is as follows. Inhibitor of shell growth. The polypeptide is Perlinhibin-related protein (Haliotis laevigata (Smooth Australian abalone)).